An 84-amino-acid chain; its full sequence is Anaphase-promoting complex subunit 11 (84 aa).

An RING-type; atypical zinc finger spans residues 34-77 (CPDCKLPGDDCPLIWGACNHAFHLHCILKWVNSQTSQAHCPMCR).

The protein belongs to the RING-box family. As to quaternary structure, part of the APC/C complex composed of at least 10 subunits. Interacts with APC2.

The protein localises to the cytoplasm. It localises to the nucleus. It functions in the pathway protein modification; protein ubiquitination. Functionally, component of the anaphase promoting complex/cyclosome (APC/C), a cell cycle-regulated E3 ubiquitin-protein ligase complex that controls progression through mitosis and the G1 phase of the cell cycle. The APC/C complex controls several key steps in the cell cycle by mediating ubiquitination and subsequent degradation of target proteins such as cyclins. The APC/C complex is required for the female gametophyte development and is involved in several aspect of development by controlling cell division and cell elongation. Involved in the control of endoreduplication. May recruit the E2 ubiquitin-conjugating enzymes to the complex. The polypeptide is Anaphase-promoting complex subunit 11 (Arabidopsis thaliana (Mouse-ear cress)).